Reading from the N-terminus, the 179-residue chain is Natural killer cells antigen CD94 (179 aa).

The Cytoplasmic portion of the chain corresponds to 1-10; sequence MAVFKTTLWR. A helical; Signal-anchor for type II membrane protein transmembrane segment spans residues 11–31; that stretch reads LISGTLGIICLSLMATLGILL. The Extracellular portion of the chain corresponds to 32–179; the sequence is KNSFTKLSVE…NRYICKQQLI (148 aa). 2 disulfide bridges follow: cysteine 58–cysteine 70 and cysteine 61–cysteine 72. Positions 68-175 constitute a C-type lectin domain; sequence YRCNCYFISS…CETKNRYICK (108 aa). 2 N-linked (GlcNAc...) asparagine glycosylation sites follow: asparagine 83 and asparagine 132. Disulfide bonds link cysteine 89-cysteine 174 and cysteine 152-cysteine 166.

As to quaternary structure, can form disulfide-bonded heterodimer with NKG2 family members KLRC1 and KLRC2. KLRD1-KLRC1 heterodimer interacts with peptide-bound MHC-E-B2M heterotrimeric complex. KLRD1 plays a prominent role in directly interacting with MHC-E. KLRD1-KLRC1 interacts with much higher affinity with peptide-bound MHC-E-B2M than KLRD1-KLRC2. Interacts with the adapter protein TYROBP/DAP12; this interaction is required for cell surface expression and cell activation. As to expression, natural killer cells.

It is found in the cell membrane. Immune receptor involved in self-nonself discrimination. In complex with KLRC1 or KLRC2 on cytotoxic and regulatory lymphocyte subsets, recognizes non-classical major histocompatibility (MHC) class Ib molecule MHC-E loaded with self-peptides derived from the signal sequence of classical MHC class Ia and non-classical MHC class Ib molecules. Enables cytotoxic cells to monitor the expression of MHC class I molecules in healthy cells and to tolerate self. Primarily functions as a ligand binding subunit as it lacks the capacity to signal. Functionally, KLRD1-KLRC1 acts as an immune inhibitory receptor. Key inhibitory receptor on natural killer (NK) cells that regulates their activation and effector functions. Dominantly counteracts T cell receptor signaling on a subset of memory/effector CD8-positive T cells as part of an antigen-driven response to avoid autoimmunity. On intraepithelial CD8-positive gamma-delta regulatory T cells triggers TGFB1 secretion, which in turn limits the cytotoxic programming of intraepithelial CD8-positive alpha-beta T cells, distinguishing harmless from pathogenic antigens. In MHC-E-rich tumor microenvironment, acts as an immune inhibitory checkpoint and may contribute to progressive loss of effector functions of NK cells and tumor-specific T cells, a state known as cell exhaustion. Upon MHC-E-peptide binding, transmits intracellular signals through KLRC1 immunoreceptor tyrosine-based inhibition motifs (ITIMs) by recruiting INPP5D/SHIP-1 and INPPL1/SHIP-2 tyrosine phosphatases to ITIMs, and ultimately opposing signals transmitted by activating receptors through dephosphorylation of proximal signaling molecules. Its function is as follows. KLRD1-KLRC2 acts as an immune activating receptor. On cytotoxic lymphocyte subsets recognizes MHC-E loaded with signal sequence-derived peptides from non-classical MHC class Ib MHC-G molecules, likely playing a role in the generation and effector functions of adaptive NK cells and in maternal-fetal tolerance during pregnancy. Regulates the effector functions of terminally differentiated cytotoxic lymphocyte subsets, and in particular may play a role in adaptive NK cell response to viral infection. Upon MHC-E-peptide binding, transmits intracellular signals via the adapter protein TYROBP/DAP12, triggering the phosphorylation of proximal signaling molecules and cell activation. The chain is Natural killer cells antigen CD94 (KLRD1) from Macaca mulatta (Rhesus macaque).